Reading from the N-terminus, the 253-residue chain is Probable transcriptional regulatory protein Mmar10_2433 (253 aa).

Belongs to the TACO1 family.

It is found in the cytoplasm. The polypeptide is Probable transcriptional regulatory protein Mmar10_2433 (Maricaulis maris (strain MCS10) (Caulobacter maris)).